The chain runs to 300 residues: Ribonuclease HIII (300 aa).

In terms of domain architecture, RNase H type-2 spans 86–300 (RPRLGVDESG…FNEICDSASA (215 aa)). A divalent metal cation is bound by residues Asp92, Glu93, and Asp196.

It belongs to the RNase HII family. RnhC subfamily. Mn(2+) serves as cofactor. It depends on Mg(2+) as a cofactor.

It localises to the cytoplasm. The enzyme catalyses Endonucleolytic cleavage to 5'-phosphomonoester.. Functionally, endonuclease that specifically degrades the RNA of RNA-DNA hybrids. This chain is Ribonuclease HIII, found in Chlamydia felis (strain Fe/C-56) (Chlamydophila felis).